Consider the following 355-residue polypeptide: UDP-N-acetylglucosamine--N-acetylmuramyl-(pentapeptide) pyrophosphoryl-undecaprenol N-acetylglucosamine transferase (355 aa).

UDP-N-acetyl-alpha-D-glucosamine is bound by residues 15–17 (TGG), Asn-127, Arg-163, Ser-191, Ile-244, 263–268 (ALTVSE), and Gln-288.

This sequence belongs to the glycosyltransferase 28 family. MurG subfamily.

It localises to the cell inner membrane. It carries out the reaction di-trans,octa-cis-undecaprenyl diphospho-N-acetyl-alpha-D-muramoyl-L-alanyl-D-glutamyl-meso-2,6-diaminopimeloyl-D-alanyl-D-alanine + UDP-N-acetyl-alpha-D-glucosamine = di-trans,octa-cis-undecaprenyl diphospho-[N-acetyl-alpha-D-glucosaminyl-(1-&gt;4)]-N-acetyl-alpha-D-muramoyl-L-alanyl-D-glutamyl-meso-2,6-diaminopimeloyl-D-alanyl-D-alanine + UDP + H(+). It functions in the pathway cell wall biogenesis; peptidoglycan biosynthesis. In terms of biological role, cell wall formation. Catalyzes the transfer of a GlcNAc subunit on undecaprenyl-pyrophosphoryl-MurNAc-pentapeptide (lipid intermediate I) to form undecaprenyl-pyrophosphoryl-MurNAc-(pentapeptide)GlcNAc (lipid intermediate II). The sequence is that of UDP-N-acetylglucosamine--N-acetylmuramyl-(pentapeptide) pyrophosphoryl-undecaprenol N-acetylglucosamine transferase from Escherichia coli O45:K1 (strain S88 / ExPEC).